Consider the following 518-residue polypeptide: Endoglucanase 18 (518 aa).

Over 1-35 the chain is Cytoplasmic; the sequence is MANCVRCCCWLLVLMLMALAITAAVVFVRYKNGEG. A helical transmembrane segment spans residues 36–56; sequence VFPFPGVPGAVDHKYADALAV. Residues 57-518 are Extracellular-facing; it reads ALQFFQVQKS…STSSLARSLS (462 aa). N-linked (GlcNAc...) asparagine glycosylation is present at asparagine 71. Aspartate 101 serves as the catalytic Nucleophile. N-linked (GlcNAc...) asparagine glycans are attached at residues asparagine 214, asparagine 251, and asparagine 272. Histidine 436 is an active-site residue. The N-linked (GlcNAc...) asparagine glycan is linked to asparagine 477. Residues aspartate 482 and glutamate 491 contribute to the active site.

It belongs to the glycosyl hydrolase 9 (cellulase E) family.

The protein resides in the membrane. The catalysed reaction is Endohydrolysis of (1-&gt;4)-beta-D-glucosidic linkages in cellulose, lichenin and cereal beta-D-glucans.. In Oryza sativa subsp. japonica (Rice), this protein is Endoglucanase 18.